Reading from the N-terminus, the 241-residue chain is tRNA pseudouridine synthase B (241 aa).

Aspartate 52 (nucleophile) is an active-site residue.

It belongs to the pseudouridine synthase TruB family. Type 1 subfamily.

It carries out the reaction uridine(55) in tRNA = pseudouridine(55) in tRNA. Functionally, responsible for synthesis of pseudouridine from uracil-55 in the psi GC loop of transfer RNAs. This is tRNA pseudouridine synthase B from Chloroherpeton thalassium (strain ATCC 35110 / GB-78).